We begin with the raw amino-acid sequence, 461 residues long: tRNA modification GTPase MnmE (461 aa).

The (6S)-5-formyl-5,6,7,8-tetrahydrofolate site is built by R27, E89, and R128. In terms of domain architecture, TrmE-type G spans 224-382 (GLATAIVGRP…LENAIEKLFF (159 aa)). N234 is a K(+) binding site. GTP-binding positions include 234–239 (NVGKSS), 253–259 (TDIAGTT), and 278–281 (DTAG). A Mg(2+)-binding site is contributed by S238. 3 residues coordinate K(+): T253, I255, and T258. T259 is a binding site for Mg(2+). Residue K461 coordinates (6S)-5-formyl-5,6,7,8-tetrahydrofolate.

Belongs to the TRAFAC class TrmE-Era-EngA-EngB-Septin-like GTPase superfamily. TrmE GTPase family. As to quaternary structure, homodimer. Heterotetramer of two MnmE and two MnmG subunits. K(+) serves as cofactor.

It is found in the cytoplasm. In terms of biological role, exhibits a very high intrinsic GTPase hydrolysis rate. Involved in the addition of a carboxymethylaminomethyl (cmnm) group at the wobble position (U34) of certain tRNAs, forming tRNA-cmnm(5)s(2)U34. The protein is tRNA modification GTPase MnmE of Lactobacillus gasseri (strain ATCC 33323 / DSM 20243 / BCRC 14619 / CIP 102991 / JCM 1131 / KCTC 3163 / NCIMB 11718 / NCTC 13722 / AM63).